Consider the following 497-residue polypeptide: WASH complex subunit homolog 1 (497 aa).

Residues 306-497 (EASEPTEAEA…PPNFDDEEWD (192 aa)) form a disordered region. The segment covering 323–339 (LPPPPPPMKLDPSPQPA) has biased composition (pro residues). Positions 341–350 (TPVEITEIPP) are enriched in low complexity. Over residues 351 to 372 (IISPPAPPPPPPPPPPPPPPQT) the composition is skewed to pro residues. Residues 390–412 (GRSDLMAAIRAAGGAGNAKLSRI) form the WH2 domain.

The protein belongs to the WASH1 family. Component of the WASH core complex. Component of the DHIC (ddl-1-containing hsf-1 inhibitory) complex, which contains at least ddl-1, ddl-2, hsb-1 and hsf-1. Within the complex, interacts with ddl-1. Formation of the DHIC may be dependent upon the Insulin/IGF-1-like signaling (IIS) mediated pathway. As to expression, expressed in several neurons located throughout the body.

In terms of biological role, acts as a component of the WASH core complex that functions as a nucleation-promoting factor (NPF) at the surface of endosomes, where it recruits and activates the Arp2/3 complex to induce actin polymerization, playing a key role in the fission of tubules that serve as transport intermediates during endosome sorting. Acts as a component of the DHIC (ddl-1-containing hsf-1 inhibitory complex) which modulates lifespan by sequestering the heat shock transcription factor hsf-1 to negatively regulate its binding to DNA and its transcriptional activity. The sequence is that of WASH complex subunit homolog 1 from Caenorhabditis elegans.